The following is a 232-amino-acid chain: Glycerol-3-phosphate acyltransferase (232 aa).

6 helical membrane-spanning segments follow: residues 4-24 (FLAI…IIAG), 56-76 (AVTL…VAFF), 90-110 (IALN…TVFA), 124-144 (MLIG…ILAI), 147-167 (TRYV…IIAI), and 191-211 (SLDY…IYTH).

Belongs to the PlsY family. In terms of assembly, probably interacts with PlsX.

It localises to the cell inner membrane. The enzyme catalyses an acyl phosphate + sn-glycerol 3-phosphate = a 1-acyl-sn-glycero-3-phosphate + phosphate. The protein operates within lipid metabolism; phospholipid metabolism. In terms of biological role, catalyzes the transfer of an acyl group from acyl-phosphate (acyl-PO(4)) to glycerol-3-phosphate (G3P) to form lysophosphatidic acid (LPA). This enzyme utilizes acyl-phosphate as fatty acyl donor, but not acyl-CoA or acyl-ACP. The sequence is that of Glycerol-3-phosphate acyltransferase from Chlorobaculum parvum (strain DSM 263 / NCIMB 8327) (Chlorobium vibrioforme subsp. thiosulfatophilum).